Here is a 70-residue protein sequence, read N- to C-terminus: Protein SlyX homolog (70 aa).

The protein belongs to the SlyX family.

This is Protein SlyX homolog from Shewanella denitrificans (strain OS217 / ATCC BAA-1090 / DSM 15013).